Reading from the N-terminus, the 633-residue chain is tRNA uridine 5-carboxymethylaminomethyl modification enzyme MnmG (633 aa).

Residue 13–18 coordinates FAD; it reads GGGHAG. 273–287 contributes to the NAD(+) binding site; it reads GPRYCPSIEDKINRF.

This sequence belongs to the MnmG family. Homodimer. Heterotetramer of two MnmE and two MnmG subunits. Requires FAD as cofactor.

The protein localises to the cytoplasm. Functionally, NAD-binding protein involved in the addition of a carboxymethylaminomethyl (cmnm) group at the wobble position (U34) of certain tRNAs, forming tRNA-cmnm(5)s(2)U34. The sequence is that of tRNA uridine 5-carboxymethylaminomethyl modification enzyme MnmG from Pseudoalteromonas atlantica (strain T6c / ATCC BAA-1087).